A 465-amino-acid chain; its full sequence is MAP kinase-interacting serine/threonine-protein kinase 1 (465 aa).

Positions 1-11 are enriched in basic and acidic residues; the sequence is MVSSQKLEKPI. Residues 1–40 form a disordered region; it reads MVSSQKLEKPIEMGSSEPLPIADGDRRRKKKRRGRATDSL. At Ser39 the chain carries Phosphoserine. The region spanning 49 to 374 is the Protein kinase domain; it reads KLTSELLGEG…AAQVLQHPWV (326 aa). Residues 55 to 63 and Lys78 each bind ATP; that span reads LGEGAYAKV. A compositionally biased stretch (polar residues) spans 185–203; it reads APTSLGSSDPPTSASQVAG. The interval 185–204 is disordered; the sequence is APTSLGSSDPPTSASQVAGT. Asp211 serves as the catalytic Proton acceptor. Phosphoserine occurs at positions 221 and 226. Thr250, Thr255, and Thr385 each carry phosphothreonine. The interval 446–465 is disordered; that stretch reads RRRALAQAGRGEDRSPPTAL. Positions 455–465 are enriched in basic and acidic residues; it reads RGEDRSPPTAL. A Phosphoserine modification is found at Ser460.

The protein belongs to the protein kinase superfamily. CAMK Ser/Thr protein kinase family. In terms of assembly, interacts with the C-terminal regions of EIF4G1 and EIF4G2. Also binds to dephosphorylated ERK1 and ERK2, and to the p38 kinases. The cofactor is Mg(2+). Post-translationally, dual phosphorylation of Thr-250 and Thr-255 activates the kinase. Phosphorylation of Thr-385 activates the kinase. MAPK3/ERK1 is one of the kinases which activate MKNK1/MNK1. Phosphorylation by PAK2 leads to a reduced phosphorylation of EIF4G1. As to expression, ubiquitous.

The protein localises to the cytoplasm. Its subcellular location is the nucleus. The enzyme catalyses L-seryl-[protein] + ATP = O-phospho-L-seryl-[protein] + ADP + H(+). It catalyses the reaction L-threonyl-[protein] + ATP = O-phospho-L-threonyl-[protein] + ADP + H(+). Phosphorylated and activated by the p38 kinases and kinases in the Erk pathway. Functionally, may play a role in the response to environmental stress and cytokines. Appears to regulate translation by phosphorylating EIF4E, thus increasing the affinity of this protein for the 7-methylguanosine-containing mRNA cap. In Homo sapiens (Human), this protein is MAP kinase-interacting serine/threonine-protein kinase 1 (MKNK1).